The sequence spans 254 residues: Phosphoribosylaminoimidazole-succinocarboxamide synthase (254 aa).

The protein belongs to the SAICAR synthetase family.

It catalyses the reaction 5-amino-1-(5-phospho-D-ribosyl)imidazole-4-carboxylate + L-aspartate + ATP = (2S)-2-[5-amino-1-(5-phospho-beta-D-ribosyl)imidazole-4-carboxamido]succinate + ADP + phosphate + 2 H(+). It functions in the pathway purine metabolism; IMP biosynthesis via de novo pathway; 5-amino-1-(5-phospho-D-ribosyl)imidazole-4-carboxamide from 5-amino-1-(5-phospho-D-ribosyl)imidazole-4-carboxylate: step 1/2. The polypeptide is Phosphoribosylaminoimidazole-succinocarboxamide synthase (Brucella melitensis biotype 2 (strain ATCC 23457)).